Reading from the N-terminus, the 87-residue chain is Omega-theraphotoxin-Gr1a (87 aa).

A signal peptide spans 1-24 (MKAQIFVVVLGLAALSVLCYGSEA). Residues 25 to 49 (DESALHEEIFQLLAASDEVPKPQER) constitute a propeptide that is removed on maturation. 3 disulfides stabilise this stretch: Cys51–Cys65, Cys58–Cys70, and Cys64–Cys79. Position 85 is a valine amide (Val85).

As to expression, expressed by the venom gland.

It is found in the secreted. Functionally, inhibits P/Q- (Cav2.1/CACNA1A) and N-type (Cav2.2/CACNA1B) voltage-gated calcium channel by modifying voltage-dependent gating. It selectively and reversibly blocks the calcium channels coupled to glutamate release. Also inhibits potassium channels (Kv2.1/KCNB1) with lower affinity. Has also been shown to weakly inhibit Kv11.1/KCNH2/ERG1, Kv1.2/KCNA2, Kv1.3/KCNA3, Nav1.5/SCN5A, Nav1.7/SCN9A and TRPV1. In Grammostola rosea (Chilean rose tarantula), this protein is Omega-theraphotoxin-Gr1a.